Here is a 177-residue protein sequence, read N- to C-terminus: Large ribosomal subunit protein uL6 (177 aa).

Belongs to the universal ribosomal protein uL6 family. Part of the 50S ribosomal subunit.

This protein binds to the 23S rRNA, and is important in its secondary structure. It is located near the subunit interface in the base of the L7/L12 stalk, and near the tRNA binding site of the peptidyltransferase center. In Verminephrobacter eiseniae (strain EF01-2), this protein is Large ribosomal subunit protein uL6.